The primary structure comprises 166 residues: Lipoprotein signal peptidase (166 aa).

The next 3 helical transmembrane spans lie at 12-32, 70-90, and 102-122; these read WLWVVVAVLIIDLGSKFLILQ, WFFSGIAIGICVVLTVLMYRS, and ALIIGGALGNLFDRLWHGFVV. Catalysis depends on residues Asp123 and Asp141. A helical transmembrane segment spans residues 137–157; sequence FNLADSAICIGAALIVLEGFL.

This sequence belongs to the peptidase A8 family.

Its subcellular location is the cell inner membrane. The enzyme catalyses Release of signal peptides from bacterial membrane prolipoproteins. Hydrolyzes -Xaa-Yaa-Zaa-|-(S,diacylglyceryl)Cys-, in which Xaa is hydrophobic (preferably Leu), and Yaa (Ala or Ser) and Zaa (Gly or Ala) have small, neutral side chains.. It functions in the pathway protein modification; lipoprotein biosynthesis (signal peptide cleavage). Its function is as follows. This protein specifically catalyzes the removal of signal peptides from prolipoproteins. This chain is Lipoprotein signal peptidase, found in Klebsiella pneumoniae (strain 342).